Here is a 318-residue protein sequence, read N- to C-terminus: Methionyl-tRNA formyltransferase (318 aa).

(6S)-5,6,7,8-tetrahydrofolate is bound at residue 112-115; it reads SLLP.

It belongs to the Fmt family.

It carries out the reaction L-methionyl-tRNA(fMet) + (6R)-10-formyltetrahydrofolate = N-formyl-L-methionyl-tRNA(fMet) + (6S)-5,6,7,8-tetrahydrofolate + H(+). In terms of biological role, attaches a formyl group to the free amino group of methionyl-tRNA(fMet). The formyl group appears to play a dual role in the initiator identity of N-formylmethionyl-tRNA by promoting its recognition by IF2 and preventing the misappropriation of this tRNA by the elongation apparatus. The protein is Methionyl-tRNA formyltransferase of Citrifermentans bemidjiense (strain ATCC BAA-1014 / DSM 16622 / JCM 12645 / Bem) (Geobacter bemidjiensis).